The sequence spans 635 residues: Threonine--tRNA ligase (635 aa).

The TGS domain maps to 1 to 61 (MINISFPDGS…DNDCKLRILT (61 aa)). Positions 242–533 (DHRKLGRELD…LIEEYAGRFP (292 aa)) are catalytic. Residues C333, H384, and H510 each coordinate Zn(2+).

It belongs to the class-II aminoacyl-tRNA synthetase family. As to quaternary structure, homodimer. Zn(2+) is required as a cofactor.

The protein localises to the cytoplasm. It carries out the reaction tRNA(Thr) + L-threonine + ATP = L-threonyl-tRNA(Thr) + AMP + diphosphate + H(+). In terms of biological role, catalyzes the attachment of threonine to tRNA(Thr) in a two-step reaction: L-threonine is first activated by ATP to form Thr-AMP and then transferred to the acceptor end of tRNA(Thr). Also edits incorrectly charged L-seryl-tRNA(Thr). The polypeptide is Threonine--tRNA ligase (Rickettsia conorii (strain ATCC VR-613 / Malish 7)).